Reading from the N-terminus, the 300-residue chain is Inosose dehydratase (300 aa).

It belongs to the IolE/MocC family. The cofactor is glutathione. Co(2+) is required as a cofactor. It depends on Mn(2+) as a cofactor.

The catalysed reaction is scyllo-inosose = 3D-3,5/4-trihydroxycyclohexane-1,2-dione + H2O. It participates in polyol metabolism; myo-inositol degradation into acetyl-CoA; acetyl-CoA from myo-inositol: step 2/7. In terms of biological role, catalyzes the dehydration of inosose (2-keto-myo-inositol, 2KMI or 2,4,6/3,5-pentahydroxycyclohexanone) to 3D-(3,5/4)-trihydroxycyclohexane-1,2-dione (D-2,3-diketo-4-deoxy-epi-inositol). The protein is Inosose dehydratase of Bacillus licheniformis (strain ATCC 14580 / DSM 13 / JCM 2505 / CCUG 7422 / NBRC 12200 / NCIMB 9375 / NCTC 10341 / NRRL NRS-1264 / Gibson 46).